The following is a 313-amino-acid chain: Olfactory receptor 10P1 (313 aa).

Residues 1–25 (MAGENHTTLPEFLLLGFSDLKALQG) are Extracellular-facing. N-linked (GlcNAc...) asparagine glycosylation is present at Asn-5. The chain crosses the membrane as a helical span at residues 26 to 46 (PLFWVVLLVYLVTLLGNSLII). At 47-54 (LLTQVSPA) the chain is on the cytoplasmic side. A helical transmembrane segment spans residues 55-75 (LHSPMYFFLRQLSVVELFYTT). Residues 76–100 (DIVPRTLANLGSPHPQAISFQGCAA) are Extracellular-facing. A helical membrane pass occupies residues 101–121 (QMYVFIVLGISECCLLTAMAY). At 122 to 140 (DRYVAICQPLRYSTLLSPR) the chain is on the cytoplasmic side. A helical membrane pass occupies residues 141–161 (ACMAMVGTSWLTGIITATTHA). The Extracellular portion of the chain corresponds to 162 to 198 (SLIFSLPFRSHPIIPHFLCDILPVLRLASAGKHRSEI). The chain crosses the membrane as a helical span at residues 199-218 (SVMTATIVFIMIPFSLIVTS). Residues 219–238 (YIRILGAILAMASTQSRRKV) lie on the Cytoplasmic side of the membrane. Residues 239–259 (FSTCSSHLLVVSLFFGTASIT) form a helical membrane-spanning segment. Residues 260-272 (YIRPQAGSSVTTD) lie on the Extracellular side of the membrane. Residues 273–293 (RVLSLFYTVITPMLNPIIYTL) traverse the membrane as a helical segment. The Cytoplasmic segment spans residues 294–313 (RNKDVRRALRHLVKRQRPSP).

The protein belongs to the G-protein coupled receptor 1 family.

It localises to the cell membrane. Odorant receptor. The protein is Olfactory receptor 10P1 (OR10P1) of Homo sapiens (Human).